A 123-amino-acid chain; its full sequence is UPF0102 protein Fjoh_1217 (123 aa).

Belongs to the UPF0102 family.

This Flavobacterium johnsoniae (strain ATCC 17061 / DSM 2064 / JCM 8514 / BCRC 14874 / CCUG 350202 / NBRC 14942 / NCIMB 11054 / UW101) (Cytophaga johnsonae) protein is UPF0102 protein Fjoh_1217.